A 184-amino-acid polypeptide reads, in one-letter code: MDSRLNPFQDKMEKTLNNLEEEYAGIRAGRANPHILDKLRVDYYGTPSPIQSVANVSVPEPRMIQIQPWEASMVKEIEKAINCSDIGINPTNDGKLIRLVFPELTEERRKDLAKDIKKKGEEAKVAVRNIRRDAIDSIKKTGKEEGISEDEIKGLEDDAQKLTDKFVAKVDAAVDAKCKEILTV.

It belongs to the RRF family.

It localises to the cytoplasm. Functionally, responsible for the release of ribosomes from messenger RNA at the termination of protein biosynthesis. May increase the efficiency of translation by recycling ribosomes from one round of translation to another. The protein is Ribosome-recycling factor of Agathobacter rectalis (strain ATCC 33656 / DSM 3377 / JCM 17463 / KCTC 5835 / VPI 0990) (Eubacterium rectale).